A 377-amino-acid polypeptide reads, in one-letter code: UPF0754 membrane protein YheB (377 aa).

Helical transmembrane passes span 1–21 and 357–377; these read MGIA…GAVT and YLGG…VILF.

It belongs to the UPF0754 family.

It localises to the cell membrane. This is UPF0754 membrane protein YheB (yheB) from Bacillus subtilis (strain 168).